The following is a 588-amino-acid chain: Probable urocanate hydratase (588 aa).

The segment covering 1-15 (MDTPSAAAETSEPSA) has biased composition (low complexity). The tract at residues 1–22 (MDTPSAAAETSEPSAQWQAYRG) is disordered. NAD(+)-binding positions include 62-63 (GG), glutamine 140, 188-190 (GMG), glutamate 208, arginine 213, 254-255 (NA), 275-279 (QTSAH), and tyrosine 334. Cysteine 431 is an active-site residue. Glycine 520 is a binding site for NAD(+).

Belongs to the urocanase family. NAD(+) serves as cofactor.

Its subcellular location is the cytoplasm. The enzyme catalyses 4-imidazolone-5-propanoate = trans-urocanate + H2O. It functions in the pathway amino-acid degradation; L-histidine degradation into L-glutamate; N-formimidoyl-L-glutamate from L-histidine: step 2/3. In terms of biological role, catalyzes the conversion of urocanate to 4-imidazolone-5-propionate. In Halobacterium salinarum (strain ATCC 29341 / DSM 671 / R1), this protein is Probable urocanate hydratase.